A 313-amino-acid chain; its full sequence is Probable pyridoxal 5'-phosphate synthase subunit PDX1.2 (313 aa).

D42 is a binding site for D-ribose 5-phosphate. Residue K99 is the Schiff-base intermediate with D-ribose 5-phosphate of the active site. A D-ribose 5-phosphate-binding site is contributed by G171. A D-glyceraldehyde 3-phosphate-binding site is contributed by R183. D-ribose 5-phosphate is bound by residues G232 and 253-254; that span reads GS.

Belongs to the PdxS/SNZ family.

The enzyme catalyses aldehydo-D-ribose 5-phosphate + D-glyceraldehyde 3-phosphate + L-glutamine = pyridoxal 5'-phosphate + L-glutamate + phosphate + 3 H2O + H(+). Its pathway is cofactor biosynthesis; pyridoxal 5'-phosphate biosynthesis. In terms of biological role, catalyzes the formation of pyridoxal 5'-phosphate from ribose 5-phosphate (RBP), glyceraldehyde 3-phosphate (G3P) and ammonia. The ammonia is provided by PDX2. Can also use ribulose 5-phosphate and dihydroxyacetone phosphate as substrates, resulting from enzyme-catalyzed isomerization of RBP and G3P, respectively. Also plays an indirect role in resistance to singlet oxygen-generating photosensitizers. The chain is Probable pyridoxal 5'-phosphate synthase subunit PDX1.2 (PDX12) from Oryza sativa subsp. japonica (Rice).